The sequence spans 883 residues: Probable ribonuclease ZC3H12C (883 aa).

Disordered regions lie at residues glutamine 53–glutamate 109 and aspartate 139–valine 158. Phosphoserine is present on serine 230. An RNase NYN domain is found at leucine 245 to asparagine 400. Residues glutamate 410–arginine 435 form a C3H1-type zinc finger. Disordered regions lie at residues alanine 456–glutamine 551, phenylalanine 680–histidine 738, and serine 754–glycine 775. Residues lysine 466 to aspartate 477 are compositionally biased toward polar residues. Residues leucine 503–threonine 515 are compositionally biased toward basic and acidic residues. The segment covering serine 517–leucine 542 has biased composition (polar residues). Positions histidine 705–alanine 714 are enriched in low complexity.

This sequence belongs to the ZC3H12 family. Requires Mg(2+) as cofactor.

Its function is as follows. May function as RNase and regulate the levels of target RNA species. The protein is Probable ribonuclease ZC3H12C (ZC3H12C) of Homo sapiens (Human).